Consider the following 220-residue polypeptide: Phosphatidylinositol phosphate synthase (220 aa).

A run of 2 helical transmembrane segments spans residues 21 to 46 and 52 to 72; these read LLRA…ALTL and LFWG…DGAM. 29–32 provides a ligand contact to a CDP-1,2-diacyl-sn-glycerol; the sequence is DTVT. Mg(2+) is bound by residues Asp66 and Asp69. Residues Gly70, Arg74, and Thr80 each contribute to the a CDP-1,2-diacyl-sn-glycerol site. Mg(2+) is bound by residues Asp87 and Asp91. Asp91 (proton acceptor) is an active-site residue. The next 4 membrane-spanning stretches (helical) occupy residues 93–110, 116–134, 154–171, and 177–194; these read VADG…AFGW, VVAT…YVKA, LIIV…GVQW, and MWVL…RMHA.

This sequence belongs to the CDP-alcohol phosphatidyltransferase class-I family. In terms of assembly, homodimer. It depends on Mg(2+) as a cofactor.

Its subcellular location is the cell membrane. The catalysed reaction is a CDP-1,2-diacyl-sn-glycerol + 1D-myo-inositol 3-phosphate = a 1,2-diacyl-sn-glycero-3-phospho-(1D-myo-inositol-3-phosphate) + CMP + H(+). The enzyme catalyses 1,2-di-(9Z-octadecenoyl)-sn-glycero-3-cytidine-5'-diphosphate + 1D-myo-inositol 3-phosphate = 1,2-di-(9Z-octadecenoyl)-sn-glycero-3-phospho-(1D-myo-inositol-3-phosphate) + CMP + H(+). It functions in the pathway phospholipid metabolism; phosphatidylinositol phosphate biosynthesis. Catalyzes the conjugation of the 1'-hydroxyl group of D-myo-inositol-3-phosphate (also named L-myo-inositol-1-phosphate) with a lipid tail of cytidine diphosphate diacylglycerol (CDP-DAG), forming phosphatidylinositol phosphate (PIP) and CMP. PIP is a precursor of phosphatidylinositol (PI) which is an essential lipid for mycobacteria required for formation of their cell wall. The polypeptide is Phosphatidylinositol phosphate synthase (Mycobacteroides abscessus (strain ATCC 19977 / DSM 44196 / CCUG 20993 / CIP 104536 / JCM 13569 / NCTC 13031 / TMC 1543 / L948) (Mycobacterium abscessus)).